A 268-amino-acid polypeptide reads, in one-letter code: tRNA pseudouridine synthase A (268 aa).

Asp-52 (nucleophile) is an active-site residue. Tyr-113 serves as a coordination point for substrate.

It belongs to the tRNA pseudouridine synthase TruA family. Homodimer.

It catalyses the reaction uridine(38/39/40) in tRNA = pseudouridine(38/39/40) in tRNA. Its function is as follows. Formation of pseudouridine at positions 38, 39 and 40 in the anticodon stem and loop of transfer RNAs. The polypeptide is tRNA pseudouridine synthase A (Chlamydia abortus (strain DSM 27085 / S26/3) (Chlamydophila abortus)).